Consider the following 305-residue polypeptide: Oxygen-dependent coproporphyrinogen-III oxidase (305 aa).

Ser93 is a binding site for substrate. Residues His97 and His107 each contribute to the a divalent metal cation site. Residue His107 is the Proton donor of the active site. 109-111 (NVR) is a substrate binding site. His146 and His176 together coordinate a divalent metal cation. An important for dimerization region spans residues 241-276 (YVEFNLVFDRGTLFGLQSGGRTESILMSLPPQVRWG). 259–261 (GGR) lines the substrate pocket.

This sequence belongs to the aerobic coproporphyrinogen-III oxidase family. As to quaternary structure, homodimer. A divalent metal cation is required as a cofactor.

It localises to the cytoplasm. The catalysed reaction is coproporphyrinogen III + O2 + 2 H(+) = protoporphyrinogen IX + 2 CO2 + 2 H2O. The protein operates within porphyrin-containing compound metabolism; protoporphyrin-IX biosynthesis; protoporphyrinogen-IX from coproporphyrinogen-III (O2 route): step 1/1. Involved in the heme biosynthesis. Catalyzes the aerobic oxidative decarboxylation of propionate groups of rings A and B of coproporphyrinogen-III to yield the vinyl groups in protoporphyrinogen-IX. The chain is Oxygen-dependent coproporphyrinogen-III oxidase from Pseudomonas aeruginosa (strain LESB58).